The sequence spans 440 residues: Beta-1,3-galactosyl-O-glycosyl-glycoprotein beta-1,6-N-acetylglucosaminyltransferase 3 (440 aa).

Residues Met-1 to Arg-12 lie on the Cytoplasmic side of the membrane. The chain crosses the membrane as a helical; Signal-anchor for type II membrane protein span at residues Gly-13–Leu-30. Topologically, residues Arg-31–Leu-440 are lumenal. Disulfide bonds link Cys-73–Cys-230, Cys-164–Cys-384, Cys-185–Cys-212, and Cys-393–Cys-425. Residue Asn-108 is glycosylated (N-linked (GlcNAc...) asparagine).

This sequence belongs to the glycosyltransferase 14 family. Post-translationally, N-glycosylated.

The protein resides in the golgi apparatus membrane. The catalysed reaction is a 3-O-[beta-D-galactosyl-(1-&gt;3)-N-acetyl-alpha-D-galactosaminyl]-L-seryl-[protein] + UDP-N-acetyl-alpha-D-glucosamine = 3-O-{beta-D-galactosyl-(1-&gt;3)-[N-acetyl-beta-D-glucosaminyl-(1-&gt;6)]-N-acetyl-alpha-D-galactosaminyl}-L-seryl-[protein] + UDP + H(+). It catalyses the reaction a 3-O-[beta-D-galactosyl-(1-&gt;3)-N-acetyl-alpha-D-galactosaminyl]-L-threonyl-[protein] + UDP-N-acetyl-alpha-D-glucosamine = a 3-O-{beta-D-galactosyl-(1-&gt;3)-[N-acetyl-beta-D-glucosaminyl-(1-&gt;6)]-N-acetyl-alpha-D-galactosaminyl}-L-threonyl-[protein] + UDP + H(+). The enzyme catalyses a beta-D-Gal-(1-&gt;4)-beta-D-GlcNAc-(1-&gt;3)-beta-D-Gal-(1-&gt;4)-beta-D-GlcNAc derivative + UDP-N-acetyl-alpha-D-glucosamine = a beta-D-Gal-(1-&gt;4)-beta-D-GlcNAc-(1-&gt;3)-[beta-D-GlcNAc-(1-&gt;6)]-beta-D-Gal-(1-&gt;4)-N-acetyl-beta-D-glucosaminyl derivative + UDP + H(+). It carries out the reaction 3-O-[N-acetyl-beta-D-glucosaminyl-(1-&gt;3)-N-acetyl-alpha-D-galactosaminyl]-L-seryl-[protein] + UDP-N-acetyl-alpha-D-glucosamine = 3-O-[N-acetyl-beta-D-glucosaminyl-(1-&gt;3)-[N-acetyl-beta-D-glucosaminyl-(1-&gt;6)]-N-acetyl-alpha-D-galactosaminyl]-L-seryl-[protein] + UDP + H(+). The catalysed reaction is a 3-O-[N-acetyl-beta-D-glucosaminyl-(1-&gt;3)-N-acetyl-alpha-D-galactosaminyl]-L-threonyl-[protein] + UDP-N-acetyl-alpha-D-glucosamine = 3-O-[N-acetyl-beta-D-glucosaminyl-(1-&gt;3)-[N-acetyl-beta-D-glucosaminyl-(1-&gt;6)]-N-acetyl-alpha-D-galactosaminyl]-L-threonyl-[protein] + UDP + H(+). Its pathway is protein modification; protein glycosylation. In terms of biological role, glycosyltransferase that can synthesize all known mucin beta 6 N-acetylglucosaminides. Mediates core 2 and core 4 O-glycan branching, 2 important steps in mucin-type biosynthesis. Also has I-branching enzyme activity by converting linear into branched poly-N-acetyllactosaminoglycans, leading to introduce the blood group I antigen during embryonic development. This chain is Beta-1,3-galactosyl-O-glycosyl-glycoprotein beta-1,6-N-acetylglucosaminyltransferase 3 (GCNT3), found in Ovis aries (Sheep).